A 441-amino-acid polypeptide reads, in one-letter code: 3-phosphoshikimate 1-carboxyvinyltransferase (441 aa).

The span at 1–10 (MSVTSTASSS) shows a compositional bias: polar residues. A disordered region spans residues 1 to 21 (MSVTSTASSSRELRAGGGLSG). Residues K29, S30, and R34 each contribute to the 3-phosphoshikimate site. K29 contacts phosphoenolpyruvate. Phosphoenolpyruvate is bound by residues G103 and R132. 3-phosphoshikimate is bound by residues S177, Q179, D328, and K355. Q179 contacts phosphoenolpyruvate. The active-site Proton acceptor is the D328. Phosphoenolpyruvate-binding residues include R359 and R401.

It belongs to the EPSP synthase family. Monomer.

The protein localises to the cytoplasm. The catalysed reaction is 3-phosphoshikimate + phosphoenolpyruvate = 5-O-(1-carboxyvinyl)-3-phosphoshikimate + phosphate. It functions in the pathway metabolic intermediate biosynthesis; chorismate biosynthesis; chorismate from D-erythrose 4-phosphate and phosphoenolpyruvate: step 6/7. Its function is as follows. Catalyzes the transfer of the enolpyruvyl moiety of phosphoenolpyruvate (PEP) to the 5-hydroxyl of shikimate-3-phosphate (S3P) to produce enolpyruvyl shikimate-3-phosphate and inorganic phosphate. This Prochlorococcus marinus (strain MIT 9303) protein is 3-phosphoshikimate 1-carboxyvinyltransferase.